The following is a 132-amino-acid chain: Small ribosomal subunit protein uS8 (132 aa).

This sequence belongs to the universal ribosomal protein uS8 family. As to quaternary structure, part of the 30S ribosomal subunit. Contacts proteins S5 and S12.

One of the primary rRNA binding proteins, it binds directly to 16S rRNA central domain where it helps coordinate assembly of the platform of the 30S subunit. This Rhodopseudomonas palustris (strain BisB18) protein is Small ribosomal subunit protein uS8.